The primary structure comprises 1388 residues: MKDLMTSYSFTEKKRIRKDFGKHRSILKVPFLLAIQVDSYRAFLQGDVESSQRKDIGLHAALKSVFPIVSYSGNAALEYVGYKLGEPMFDERECRQRGMSYGAPLRVTVRLVIYDRESSTKAVKYIKEQEVYLGEIPLMTENGTFIVNGTERVIVSQLHRSPGVFFDHDRGKTHSSGKLLYSARIIPCRGSWLDFEFDPKDALFTRIDRRRKLPVSILLRALGYSNEEILGEFFEINTFHINPDKGVQLELVPERLRGEILSFNLTDGGGVIVEAGKRITARHVKQLEASGISALAVPDEYLIGRILSHDVIDATTGELLASANSEVNEDRIVAFRKAGIDSVGTLWVNDLDRGAYLSNTLRIDPTRTQLEAQVEIYRMMRPGEPPTKEAAQNLFHNLFFTFDRYDLSMVGRMKFNRRVGRKEVAGEPVLYDKKYFSDRNDEESRRLVSKLGETSDILDVIKGLCEIRNGRGVVDDIDHLGNRRVRSVGEMAENVFRVGLVRVERAVKERLSMAESEGLTPQELINAKPVAAAIKEFFGSSQLSQFMDQNNPLSEVTHKRRLSALGPGGLTRERAGFEVRDVHLSHYGCLCTIETPEGPNIGLINSLAVFARTNQYGFLETPYRKVVEGRVTDEVEYLSAIEENQYVIAQANTLTDDNGQLTESFVPCRFQGESLLKPPSYVHYMDVSPMQTVSVAAALVPFLEHDDANRALMGANMQRQAVPTLRAQKPLVGTGIERTVARDSGVTVNARRGGVIDQVDAGRIVVKVNESEIIGATDAGVDIYGLIKYTRSNQNTCINQRPLVNVGDIVTSGDVLADGPSTDIGELALGQNMLIAFMPWNGYNFEDSILLSERVVEEDRYTTIHIEELTCIARDTKLGSEEISADIPNVSEQALNRLDESGVVYIGAEVRAGDILVGKVTPKGESQLTPEEKLLRAIFGEKASDVKDSSLRVPPGMDGTVIDVQVFTRDGIEKDKRAHQIEEYEIKRVKKDFDDQFRILEGAIYARLRSQIVGKVVNSGVDIKKGEVITGAYLDGLKKSDWFALRMKDEVAVEAIDRAQKQIQAYQKEFDQRFSDKRSKITQGDDLAPGVLKMVKVFLAVKRCIQPGDKMAGRHGNKGVVSNVVPVEDMPFMEDGTPVDIVLNPLGVPSRMNIGQILEVHLGWAAKGLGHRIQRMLEANAAIADLRKFLNEIYNHDKSVVGERVDLSQFSDDELLNMAKNLTDGVPMASPVFDGASEQEIKRMLDLAELPTGGQTQLYDGHTGEPFDRKTTVGYMHYLKLNHLVDDKMHARSTGPYSLVTQQPLGGKAQFGGQRFGEMEVWALEAYGAAYTLQEMLTVKSDDVQGRNQMYKNIVDGDHQMVAGMPESFNVLVKEIRSLAINIELEDN.

Belongs to the RNA polymerase beta chain family. In terms of assembly, the RNAP catalytic core consists of 2 alpha, 1 beta, 1 beta' and 1 omega subunit. When a sigma factor is associated with the core the holoenzyme is formed, which can initiate transcription.

The catalysed reaction is RNA(n) + a ribonucleoside 5'-triphosphate = RNA(n+1) + diphosphate. Functionally, DNA-dependent RNA polymerase catalyzes the transcription of DNA into RNA using the four ribonucleoside triphosphates as substrates. This Xylella fastidiosa (strain 9a5c) protein is DNA-directed RNA polymerase subunit beta.